The sequence spans 2157 residues: Conidial yellow pigment biosynthesis polyketide synthase (2157 aa).

Positions Tyr-8–His-244 are N-terminal acylcarrier protein transacylase domain (SAT). A Ketosynthase family 3 (KS3) domain is found at Leu-376–Asp-807. Catalysis depends on for beta-ketoacyl synthase activity residues Cys-548, His-683, and His-725. A malonyl-CoA:ACP transacylase (MAT) domain region spans residues Phe-912–Asp-1232. Ser-1001 (for acyl/malonyl transferase activity) is an active-site residue. Residues Thr-1290–Pro-1603 form a product template (PT) domain region. The N-terminal hotdog fold stretch occupies residues Gln-1294 to Ala-1425. The region spanning Gln-1294–Asp-1598 is the PKS/mFAS DH domain. Catalysis depends on His-1326, which acts as the Proton acceptor; for dehydratase activity. Positions Ala-1453–Asp-1598 are C-terminal hotdog fold. Asp-1511 functions as the Proton donor; for dehydratase activity in the catalytic mechanism. Residues Ser-1607–Met-1638 are disordered. Residues Lys-1608–Pro-1619 show a composition bias toward polar residues. In terms of domain architecture, Carrier 1 spans Ser-1645–Ser-1722. The residue at position 1682 (Ser-1682) is an O-(pantetheine 4'-phosphoryl)serine. Residues Val-1725 to Pro-1760 form a disordered region. Over residues Asn-1741–Pro-1759 the composition is skewed to polar residues. Positions Ile-1767 to Pro-1844 constitute a Carrier 2 domain. Ser-1804 is modified (O-(pantetheine 4'-phosphoryl)serine). Residues Val-1847–Gln-1888 form a disordered region. The segment covering Val-1851–Asn-1878 has biased composition (polar residues). Residues Asp-1877–Leu-2149 form a claisen cyclase domain region. Residue Ser-1967 is the For thioesterase activity of the active site.

Pantetheine 4'-phosphate is required as a cofactor.

It catalyses the reaction 6 malonyl-CoA + acetyl-CoA + 6 H(+) = naphtopyrone YWA1 + 6 CO2 + 7 CoA + H2O. The protein operates within polyketide biosynthesis; heptaketide naphthopyrone YWA1 biosynthesis. Functionally, non-reducing polyketide synthase that condenses acetate units to form a heptaketide naphthopyrene YWA1, a yellow pigment found in mature asexual spores (conidia), via a polyketomethylene intermediate step. This Emericella nidulans (strain FGSC A4 / ATCC 38163 / CBS 112.46 / NRRL 194 / M139) (Aspergillus nidulans) protein is Conidial yellow pigment biosynthesis polyketide synthase.